The sequence spans 240 residues: Ribosomal RNA small subunit methyltransferase G (240 aa).

S-adenosyl-L-methionine is bound by residues glycine 79, 130 to 131, and arginine 149; that span reads AE.

The protein belongs to the methyltransferase superfamily. RNA methyltransferase RsmG family.

It localises to the cytoplasm. Specifically methylates the N7 position of a guanine in 16S rRNA. This Moorella thermoacetica (strain ATCC 39073 / JCM 9320) protein is Ribosomal RNA small subunit methyltransferase G.